Reading from the N-terminus, the 173-residue chain is Photosystem I assembly protein Ycf3 (173 aa).

3 TPR repeats span residues 35–68, 72–105, and 120–153; these read AFSY…EEDP, SYIL…NFKL, and GVQA…APDN.

This sequence belongs to the Ycf3 family.

It is found in the plastid. The protein localises to the chloroplast thylakoid membrane. Functionally, essential for the assembly of the photosystem I (PSI) complex. May act as a chaperone-like factor to guide the assembly of the PSI subunits. The polypeptide is Photosystem I assembly protein Ycf3 (Pyropia yezoensis (Susabi-nori)).